A 155-amino-acid polypeptide reads, in one-letter code: 6,7-dimethyl-8-ribityllumazine synthase (155 aa).

Residues Phe-23, 57 to 59 (AFE), and 81 to 83 (AVI) each bind 5-amino-6-(D-ribitylamino)uracil. A (2S)-2-hydroxy-3-oxobutyl phosphate-binding site is contributed by 86-87 (ST). His-89 functions as the Proton donor in the catalytic mechanism. A 5-amino-6-(D-ribitylamino)uracil-binding site is contributed by Phe-114. Residue Arg-128 coordinates (2S)-2-hydroxy-3-oxobutyl phosphate.

The protein belongs to the DMRL synthase family.

It carries out the reaction (2S)-2-hydroxy-3-oxobutyl phosphate + 5-amino-6-(D-ribitylamino)uracil = 6,7-dimethyl-8-(1-D-ribityl)lumazine + phosphate + 2 H2O + H(+). It participates in cofactor biosynthesis; riboflavin biosynthesis; riboflavin from 2-hydroxy-3-oxobutyl phosphate and 5-amino-6-(D-ribitylamino)uracil: step 1/2. Its function is as follows. Catalyzes the formation of 6,7-dimethyl-8-ribityllumazine by condensation of 5-amino-6-(D-ribitylamino)uracil with 3,4-dihydroxy-2-butanone 4-phosphate. This is the penultimate step in the biosynthesis of riboflavin. The protein is 6,7-dimethyl-8-ribityllumazine synthase of Geobacter sp. (strain M21).